We begin with the raw amino-acid sequence, 344 residues long: Phosphate acyltransferase (344 aa).

This sequence belongs to the PlsX family. As to quaternary structure, homodimer. Probably interacts with PlsY.

The protein localises to the cytoplasm. The catalysed reaction is a fatty acyl-[ACP] + phosphate = an acyl phosphate + holo-[ACP]. Its pathway is lipid metabolism; phospholipid metabolism. Catalyzes the reversible formation of acyl-phosphate (acyl-PO(4)) from acyl-[acyl-carrier-protein] (acyl-ACP). This enzyme utilizes acyl-ACP as fatty acyl donor, but not acyl-CoA. The chain is Phosphate acyltransferase from Enterobacter sp. (strain 638).